A 453-amino-acid chain; its full sequence is tRNA modification GTPase MnmE (453 aa).

Positions 22, 79, and 119 each coordinate (6S)-5-formyl-5,6,7,8-tetrahydrofolate. Positions 215-376 (GMKVVIAGRP…LKAHLKSLMG (162 aa)) constitute a TrmE-type G domain. A K(+)-binding site is contributed by Asn-225. Residues 225 to 230 (NAGKSS), 244 to 250 (TEIAGTT), 269 to 272 (DTAG), and 334 to 337 (NKAD) contribute to the GTP site. Ser-229 contacts Mg(2+). Residues Thr-244, Ile-246, and Thr-249 each contribute to the K(+) site. Thr-250 is a binding site for Mg(2+). Lys-453 contributes to the (6S)-5-formyl-5,6,7,8-tetrahydrofolate binding site.

It belongs to the TRAFAC class TrmE-Era-EngA-EngB-Septin-like GTPase superfamily. TrmE GTPase family. Homodimer. Heterotetramer of two MnmE and two MnmG subunits. Requires K(+) as cofactor.

The protein resides in the cytoplasm. Exhibits a very high intrinsic GTPase hydrolysis rate. Involved in the addition of a carboxymethylaminomethyl (cmnm) group at the wobble position (U34) of certain tRNAs, forming tRNA-cmnm(5)s(2)U34. This Shewanella loihica (strain ATCC BAA-1088 / PV-4) protein is tRNA modification GTPase MnmE.